A 130-amino-acid chain; its full sequence is Small ribosomal subunit protein uS11c (130 aa).

The protein belongs to the universal ribosomal protein uS11 family. As to quaternary structure, part of the 30S ribosomal subunit.

It localises to the plastid. It is found in the chloroplast. This chain is Small ribosomal subunit protein uS11c, found in Stigeoclonium helveticum (Green alga).